The chain runs to 198 residues: Virion infectivity factor (198 aa).

The tract at residues 76–115 (GERPWHLGHGIGLEWRQGKYSTQIDPETADQLIHTRYFTC) is RNA-binding. Position 97 is a phosphothreonine; by host MAP4K1 (T97). The HCCH motif motif lies at 109-140 (HTRYFTCFAAGAVRQAILGERILTFCHFQSGH). T145 is modified (phosphothreonine; by host). Positions 145 to 154 (TLQFLAFRKV) match the BC-box-like motif motif. Residues 152-170 (RKVVESQDKQPKGPRRPLP) are multimerization. The segment at 159–198 (DKQPKGPRRPLPSVTKLTEDRWNKHRTTTGRRENHTLSGC) is disordered. S171 is subject to Phosphoserine; by host MAP4K1. The membrane association stretch occupies residues 177 to 178 (ED). Basic and acidic residues predominate over residues 188-198 (GRRENHTLSGC).

It belongs to the primate lentivirus group Vif protein family. In terms of assembly, homomultimer; in vitro and presumably in vivo. Interacts with viral Pr55Gag precursor, host APOBEC3G, UBCE7IP1 isoform 3/ZIN, ABCE1 and possibly with SAT. Forms an E3 ligase complex by interacting with host CUL5 and elongin BC complex (ELOB and ELOC). Highly phosphorylated on serine and threonine residues. Thr-97 and Ser-171 are phosphorylated by the mitogen activated kinase MAP4K1. In terms of processing, polyubiquitinated and degraded by the proteasome in the presence of APOBEC3G.

The protein localises to the host cytoplasm. It localises to the host cell membrane. The protein resides in the virion. Its function is as follows. Counteracts the innate antiviral activity of APOBEC3G. Forms a complex with host APOBEC3G thus preventing the entry of this lethally hypermutating enzyme into progeny virions. Functions as an adapter molecule, recruiting APOBEC3G to the ubiquitin-proteasome machinery. Targets APOBEC3G for degradation through the assembly with elongin BC complex, CUL5 and RBX1. Binds viral RNA and affects the stability of viral nucleoprotein core. May play a role in viral morphology. Interacts with host ABCE1, which seems to be involved in lentiviruses capsid formation and displays RNase L inhibitor activity. This interaction may play a role in protecting viral RNA from damage during viral assembly. May interact with host SAT, which is a regulator of polyamine cell level. This interaction may be relevant since polyamines affect viral RNA properties. This is Virion infectivity factor from Pan troglodytes (Chimpanzee).